The chain runs to 1017 residues: Voltage-gated delayed rectifier potassium channel KCNH4 (1017 aa).

The Cytoplasmic segment spans residues 1–228 (MPVMKGLLAP…LLHYSVSKAI (228 aa)). The region spanning 14–90 (FLDTIATRFD…QRLHKALEGH (77 aa)) is the PAS domain. The 53-residue stretch at 93–145 (HRAEICFYRKDGSAFWCLLDMMPIKNEMGEVVLFLFSFKDITQSGSPGLGPQG) folds into the PAC domain. The tract at residues 138–157 (SPGLGPQGGRGDSNHENSLG) is disordered. The span at 139–148 (PGLGPQGGRG) shows a compositional bias: gly residues. The helical transmembrane segment at 229 to 249 (WDGLILLATFYVAVTVPYNVC) threads the bilayer. The Extracellular portion of the chain corresponds to 250-259 (FSGDDDTPIT). Residues 260 to 280 (SRHTLVSDIAVEMLFILDIIL) form a helical membrane-spanning segment. The Cytoplasmic segment spans residues 281–302 (NFRTTYVSQSGQVISAPRSIGL). The helical transmembrane segment at 303 to 323 (HYLATWFFIDLIAALPFDLLY) threads the bilayer. At 324–332 (IFNITVTSL) the chain is on the extracellular side. The N-linked (GlcNAc...) asparagine glycan is linked to N326. A helical; Voltage-sensor membrane pass occupies residues 333–353 (VHLLKTVRLLRLLRLLQKLER). At 354–361 (YSQCSAVV) the chain is on the cytoplasmic side. A helical membrane pass occupies residues 362 to 382 (LTLLMSVFALLAHWMACIWYV). The Extracellular segment spans residues 383–427 (IGRREMEANDPLLWDIGWLHELGKRLEVPYVNGSVGGPSRRSAYI). N-linked (GlcNAc...) asparagine glycosylation is present at N414. The segment at residues 428 to 448 (AALYFTLSSLTSVGFGNVCAN) is an intramembrane region (pore-forming). A Selectivity filter motif is present at residues 439 to 444 (SVGFGN). Over 449–482 (TDAEKIFSICTMLIGALMHAVVFGNVTAIIQRMY) the chain is Extracellular. N473 is a glycosylation site (N-linked (GlcNAc...) asparagine). A helical membrane pass occupies residues 483 to 503 (SRRSLYHSRMKDLKDFIRVHR). Residues 504 to 1017 (LPRPLKQRML…SFQSRSDTFH (514 aa)) lie on the Cytoplasmic side of the membrane. Residues 556–620 (LFGAASRGCL…AILGKGDLIG (65 aa)) are cNMP-binding domain. Residues 691–724 (GSDTSGLSRFSRSPRLSQPRSESLGSSSDKTLPS) show a composition bias toward polar residues. 4 disordered regions span residues 691-749 (GSDT…LPNL), 772-803 (LVSS…RCSA), 821-875 (PDLS…EAEE), and 971-1017 (LLDL…DTFH). A compositionally biased stretch (low complexity) spans 772 to 787 (LVSSPSLSPSLSPALA). Over residues 978 to 1002 (ILPPYPSEPDPLGPSPVPEASPPTP) the composition is skewed to pro residues. Residues 1008 to 1017 (SFQSRSDTFH) are compositionally biased toward polar residues.

This sequence belongs to the potassium channel family. H (Eag) (TC 1.A.1.20) subfamily. Kv12.3/KCNH4 sub-subfamily. As to quaternary structure, the potassium channel is probably composed of a homo- or heterotetrameric complex of pore-forming alpha subunits that can associate with modulating beta subunits. Detected only in brain, in particular in the telencephalon. Detected in putamen and caudate nucleus, and at lower levels in cerebral cortex, occipital and hippocampus.

The protein resides in the membrane. The enzyme catalyses K(+)(in) = K(+)(out). In terms of biological role, pore-forming (alpha) subunit of a voltage-gated delayed rectifier. Activates at more negative voltages, exhibits fast prepulse-independent activation kinetics and deactivates much more slowly, but shows no inactivation. The polypeptide is Voltage-gated delayed rectifier potassium channel KCNH4 (Homo sapiens (Human)).